A 141-amino-acid polypeptide reads, in one-letter code: Ribosomal RNA large subunit methyltransferase H (141 aa).

An S-adenosyl-L-methionine-binding site is contributed by glycine 88.

The protein belongs to the RNA methyltransferase RlmH family. In terms of assembly, homodimer.

The protein localises to the cytoplasm. It catalyses the reaction pseudouridine(1915) in 23S rRNA + S-adenosyl-L-methionine = N(3)-methylpseudouridine(1915) in 23S rRNA + S-adenosyl-L-homocysteine + H(+). Specifically methylates the pseudouridine at position 1915 (m3Psi1915) in 23S rRNA. The chain is Ribosomal RNA large subunit methyltransferase H from Novosphingobium aromaticivorans (strain ATCC 700278 / DSM 12444 / CCUG 56034 / CIP 105152 / NBRC 16084 / F199).